The sequence spans 371 residues: Cuticle collagen 71 (371 aa).

The helical transmembrane segment at 38–60 threads the bilayer; it reads GYAAVTFSTVSVICFCVTMPVVF. 2 disordered regions span residues 108-127 and 153-371; these read AGYDVHPSKPTPVGYSGGDA and EGPH…GTRR. Residues 174–186 show a composition bias toward pro residues; the sequence is PGPPGPPGPPGRP. A compositionally biased stretch (low complexity) spans 188–201; sequence PNGKAGANGLNGNP. Pro residues predominate over residues 202–222; it reads GRPPEAPCEPVTPPPCPPCPA. Residues 223–240 are compositionally biased toward low complexity; sequence GPKGAPGQAGYPGADGQP. One can recognise a Collagen-like domain in the interval 223 to 280; it reads GPKGAPGQAGYPGADGQPGSQGDNGEKGSDGAAGEKGRPGPLGKIGEPGATGETGENA. The segment covering 246 to 260 has biased composition (basic and acidic residues); that stretch reads NGEKGSDGAAGEKGR. The span at 314–323 shows a compositional bias: low complexity; that stretch reads AGAPGAPGEN. Over residues 340–349 the composition is skewed to basic and acidic residues; the sequence is HDGKAGRAGE.

This sequence belongs to the cuticular collagen family. As to quaternary structure, collagen polypeptide chains are complexed within the cuticle by disulfide bonds and other types of covalent cross-links.

The protein resides in the membrane. It is found in the nucleus. Functionally, probable cuticular collagen-like protein. Nematode cuticles are composed largely of collagen-like proteins. The cuticle functions both as an exoskeleton and as a barrier to protect the worm from its environment. Acts downstream of the Wnt signaling pathway, perhaps in the formation of the adult cuticle. The chain is Cuticle collagen 71 from Caenorhabditis elegans.